Reading from the N-terminus, the 289-residue chain is 26S proteasome non-ATPase regulatory subunit 8 (289 aa).

Ser-45 is modified (phosphoserine). Residues 101 to 270 (PSFERYMAQL…QQKPEDTTIP (170 aa)) enclose the PCI domain. Lys-236 participates in a covalent cross-link: Glycyl lysine isopeptide (Lys-Gly) (interchain with G-Cter in SUMO2).

Belongs to the proteasome subunit S14 family. As to quaternary structure, component of the 19S proteasome regulatory particle complex. The 26S proteasome consists of a 20S core particle (CP) and two 19S regulatory subunits (RP). The regulatory particle is made of a lid composed of 9 subunits including PSMD8, a base containing 6 ATPases and few additional components. Interacts with DDI2. Interacts with TASOR.

In terms of biological role, component of the 26S proteasome, a multiprotein complex involved in the ATP-dependent degradation of ubiquitinated proteins. This complex plays a key role in the maintenance of protein homeostasis by removing misfolded or damaged proteins, which could impair cellular functions, and by removing proteins whose functions are no longer required. Therefore, the proteasome participates in numerous cellular processes, including cell cycle progression, apoptosis, or DNA damage repair. The sequence is that of 26S proteasome non-ATPase regulatory subunit 8 (PSMD8) from Pongo abelii (Sumatran orangutan).